The sequence spans 235 residues: MNIRALLLSASRVGDTPYLEHTLPFIAPLTEHARNWVFIPYAGISLGYDVYLEKVREGLRNLNINISGIHEHADPRQAIRDADGIFVGGGNTFHLLHELYRYDLLFVIREQVEAGKPYVGWSAGSNIAGLSIRTTNDMPIIEPPSFTALGLLPFQLNPHYTDYQAPGHNGETRAQRLLEFTMVDPLTPVVGIQEGSALYRQGDKLTLLGDKEAYFFKGSVQKSPIAAGADLSELL.

Active-site charge relay system residues include serine 122, aspartate 137, and histidine 159.

Belongs to the peptidase S51 family.

The protein resides in the cytoplasm. It catalyses the reaction Dipeptidase E catalyzes the hydrolysis of dipeptides Asp-|-Xaa. It does not act on peptides with N-terminal Glu, Asn or Gln, nor does it cleave isoaspartyl peptides.. Hydrolyzes dipeptides containing N-terminal aspartate residues. May play a role in allowing the cell to use peptide aspartate to spare carbon otherwise required for the synthesis of the aspartate family of amino acids. In Shewanella amazonensis (strain ATCC BAA-1098 / SB2B), this protein is Peptidase E.